A 342-amino-acid chain; its full sequence is Phosphate acyltransferase (342 aa).

The protein belongs to the PlsX family. As to quaternary structure, homodimer. Probably interacts with PlsY.

The protein localises to the cytoplasm. It catalyses the reaction a fatty acyl-[ACP] + phosphate = an acyl phosphate + holo-[ACP]. Its pathway is lipid metabolism; phospholipid metabolism. In terms of biological role, catalyzes the reversible formation of acyl-phosphate (acyl-PO(4)) from acyl-[acyl-carrier-protein] (acyl-ACP). This enzyme utilizes acyl-ACP as fatty acyl donor, but not acyl-CoA. This is Phosphate acyltransferase from Legionella pneumophila (strain Paris).